We begin with the raw amino-acid sequence, 154 residues long: uncharacterized protein (154 aa).

The protein localises to the mitochondrion. This is an uncharacterized protein from Arabidopsis thaliana (Mouse-ear cress).